A 1094-amino-acid chain; its full sequence is Transport and Golgi organization protein 6 homolog (1094 aa).

A helical membrane pass occupies residues 468-488 (LTVLMDSLLPVLGVLFLLYCF). Ser-556 is subject to Phosphoserine. Positions 777–795 (EEQQQTSHERPTDVAHSHL) are enriched in basic and acidic residues. The segment at 777–834 (EEQQQTSHERPTDVAHSHLEQQQSHETAPQTGLQSNAPIIPQGVNEPSTTTSQKSGSV) is disordered. Composition is skewed to polar residues over residues 796-813 (EQQQSHETAPQTGLQSNA) and 821-834 (NEPSTTTSQKSGSV). HEAT repeat units lie at residues 873–909 (LEMQEKLLKIFLENLEHEDTFVYLSAIQGVALLSDVY) and 952–988 (SKYREPLIHTFLRGVRDPDGAHRASSLANLGELCQRL).

The protein belongs to the Tango6 family.

It localises to the membrane. The sequence is that of Transport and Golgi organization protein 6 homolog (TANGO6) from Homo sapiens (Human).